The sequence spans 511 residues: Histidine ammonia-lyase (511 aa).

Residues 142-144 (ASG) constitute a cross-link (5-imidazolinone (Ala-Gly)). Residue Ser143 is modified to 2,3-didehydroalanine (Ser).

The protein belongs to the PAL/histidase family. Contains an active site 4-methylidene-imidazol-5-one (MIO), which is formed autocatalytically by cyclization and dehydration of residues Ala-Ser-Gly.

The protein localises to the cytoplasm. It catalyses the reaction L-histidine = trans-urocanate + NH4(+). The protein operates within amino-acid degradation; L-histidine degradation into L-glutamate; N-formimidoyl-L-glutamate from L-histidine: step 1/3. The chain is Histidine ammonia-lyase from Brucella suis (strain ATCC 23445 / NCTC 10510).